The sequence spans 336 residues: Speedy protein E1 (336 aa).

The segment at 16–50 (GVDPSPPCRSLGWKRKREWSDESEEEPEKELAPEP) is disordered. A compositionally biased stretch (acidic residues) spans 36 to 50 (DESEEEPEKELAPEP).

Belongs to the Speedy/Ringo family. Predominantly expressed in testis and heart.

This chain is Speedy protein E1, found in Homo sapiens (Human).